The chain runs to 476 residues: Bifunctional protein HldE (476 aa).

The interval 1–319 (MKVTLPAFEK…GALASHQGES (319 aa)) is ribokinase. 195–198 (NMSE) lines the ATP pocket. Residue aspartate 264 is part of the active site. The cytidylyltransferase stretch occupies residues 345 to 476 (MTNGCFDILH…SIIQNIMARQ (132 aa)).

It in the N-terminal section; belongs to the carbohydrate kinase PfkB family. This sequence in the C-terminal section; belongs to the cytidylyltransferase family. As to quaternary structure, homodimer.

The catalysed reaction is D-glycero-beta-D-manno-heptose 7-phosphate + ATP = D-glycero-beta-D-manno-heptose 1,7-bisphosphate + ADP + H(+). The enzyme catalyses D-glycero-beta-D-manno-heptose 1-phosphate + ATP + H(+) = ADP-D-glycero-beta-D-manno-heptose + diphosphate. Its pathway is nucleotide-sugar biosynthesis; ADP-L-glycero-beta-D-manno-heptose biosynthesis; ADP-L-glycero-beta-D-manno-heptose from D-glycero-beta-D-manno-heptose 7-phosphate: step 1/4. It functions in the pathway nucleotide-sugar biosynthesis; ADP-L-glycero-beta-D-manno-heptose biosynthesis; ADP-L-glycero-beta-D-manno-heptose from D-glycero-beta-D-manno-heptose 7-phosphate: step 3/4. In terms of biological role, catalyzes the phosphorylation of D-glycero-D-manno-heptose 7-phosphate at the C-1 position to selectively form D-glycero-beta-D-manno-heptose-1,7-bisphosphate. Catalyzes the ADP transfer from ATP to D-glycero-beta-D-manno-heptose 1-phosphate, yielding ADP-D-glycero-beta-D-manno-heptose. In Shewanella denitrificans (strain OS217 / ATCC BAA-1090 / DSM 15013), this protein is Bifunctional protein HldE.